Here is a 191-residue protein sequence, read N- to C-terminus: Adenylate kinase (191 aa).

12–17 (GSGKTT) is a binding site for ATP. The segment at 34–63 (STGDLLRAESAKKTERGLLIEKFTSQGELV) is NMP. AMP contacts are provided by residues Thr35, Arg40, 61–63 (ELV), 88–91 (GYPR), and Gln95. The segment at 130 to 136 (GRSRGAD) is LID. ATP is bound at residue Arg131. The AMP site is built by Arg133 and Arg145. Arg173 is a binding site for ATP.

Belongs to the adenylate kinase family. Monomer.

It localises to the cytoplasm. The enzyme catalyses AMP + ATP = 2 ADP. It functions in the pathway purine metabolism; AMP biosynthesis via salvage pathway; AMP from ADP: step 1/1. In terms of biological role, catalyzes the reversible transfer of the terminal phosphate group between ATP and AMP. Plays an important role in cellular energy homeostasis and in adenine nucleotide metabolism. This Helicobacter pylori (strain Shi470) protein is Adenylate kinase.